A 207-amino-acid chain; its full sequence is Small ribosomal subunit protein uS4 (207 aa).

Residues 31–53 (KAKFDSKPGQHGRTSGTRTSDFG) form a disordered region. The segment covering 42-52 (GRTSGTRTSDF) has biased composition (polar residues). Residues 97-158 (SRLDNVVYRM…KSKKQTRVTE (62 aa)) form the S4 RNA-binding domain.

This sequence belongs to the universal ribosomal protein uS4 family. In terms of assembly, part of the 30S ribosomal subunit. Contacts protein S5. The interaction surface between S4 and S5 is involved in control of translational fidelity.

One of the primary rRNA binding proteins, it binds directly to 16S rRNA where it nucleates assembly of the body of the 30S subunit. In terms of biological role, with S5 and S12 plays an important role in translational accuracy. The sequence is that of Small ribosomal subunit protein uS4 from Polaromonas sp. (strain JS666 / ATCC BAA-500).